Here is a 676-residue protein sequence, read N- to C-terminus: DNA ligase (676 aa).

Residues Asp-34–Asp-38, Ser-84–Leu-85, and Glu-116 contribute to the NAD(+) site. Lys-118 (N6-AMP-lysine intermediate) is an active-site residue. NAD(+)-binding residues include Arg-139, Glu-174, Lys-294, and Lys-318. Zn(2+) is bound by residues Cys-412, Cys-415, Cys-428, and Cys-433. Residues Lys-589–Val-676 enclose the BRCT domain.

This sequence belongs to the NAD-dependent DNA ligase family. LigA subfamily. Mg(2+) is required as a cofactor. The cofactor is Mn(2+).

It carries out the reaction NAD(+) + (deoxyribonucleotide)n-3'-hydroxyl + 5'-phospho-(deoxyribonucleotide)m = (deoxyribonucleotide)n+m + AMP + beta-nicotinamide D-nucleotide.. DNA ligase that catalyzes the formation of phosphodiester linkages between 5'-phosphoryl and 3'-hydroxyl groups in double-stranded DNA using NAD as a coenzyme and as the energy source for the reaction. It is essential for DNA replication and repair of damaged DNA. This is DNA ligase from Thermus thermophilus (strain ATCC BAA-163 / DSM 7039 / HB27).